Reading from the N-terminus, the 470-residue chain is Arginine ADP-riboxanase OspC1 (470 aa).

His138, Gln139, Ser140, Leu144, Ile157, Asn167, Phe183, His201, Phe206, Asp226, and Glu320 together coordinate NAD(+). Residue Glu320 is part of the active site. ANK repeat units follow at residues 363–392 (IALQALFLSITNQKEDVALYILSNFEITRQ), 399–431 (HELYDIEYLLSAHNSSCKVLEYFINKGLVDVNT), and 438–467 (SGDCMLDNAIKYENAEMIKLLLKYGATSDN).

The protein belongs to the OspC family. In terms of assembly, interacts with host calmodulin (CALM1, CALM2 and/or CALM3); specifically interacts with the apo form of calmodulin, preventing calcium-binding.

Its subcellular location is the secreted. The protein localises to the host nucleus. It carries out the reaction L-arginyl-[protein] + NAD(+) = ADP-riboxanated L-argininyl-[protein] + nicotinamide + NH4(+) + H(+). In terms of biological role, ADP-riboxanase effector that mediates arginine ADP-riboxanation of host caspases. ADP-riboxanation of host apoptotic caspases (CASP3, CASP8 and CASP9) prevents their activation, thereby inhibiting host cell extrinsic and intrinsic apoptosis. Does not catalyze ADP-riboxanation of host CASP4/CASP11. Independently of its ADP-riboxanase activity, acts as an inhibitor of calcium signaling by inhibiting host calmodulin, preventing activation of the JAK-STAT signaling pathway in response to interferon-beta. Mechanistically, acts by binding to the apo form of calmodulin, preventing calcium-binding and ability to activate host CaMK2 (CAMKII), which is required to stimulate the JAK-STAT signaling pathway in response to interferon-beta. This Shigella flexneri protein is Arginine ADP-riboxanase OspC1.